We begin with the raw amino-acid sequence, 300 residues long: METNFKSGFLSIIGRPNVGKSTFMNKVIGQKIAIMSDKAQTTRNKIQGVFTTNDAQMIFIDTPGIHKPKHRLGDFMVQIAEDTLNEVDSILFMINADEGYGRGDQYIIDLLQKVNSPVFLIINKIDLIHPDQLLPLIEKYKSLYDFEEIIPISALEGNNVDHLVDVLKEHLPEGPQYYPEDQVTDHPERFVISELIREKVLHLTKEEVPHSIAVVIENIEKNENEKLLIQATIVTERSSQKGILIGKQGTMLKNIGKQARRDIEALLGSKVYLELWIKVKKDWRNRQNQLHEFGFRSDEY.

The 168-residue stretch at K6–E173 folds into the Era-type G domain. The segment at G14 to S21 is G1. G14–S21 lines the GTP pocket. Residues Q40–N44 form a G2 region. Positions D61–G64 are G3. Residues D61–I65 and N123–D126 each bind GTP. The interval N123–D126 is G4. The segment at I152–A154 is G5. Positions T204–K281 constitute a KH type-2 domain.

Belongs to the TRAFAC class TrmE-Era-EngA-EngB-Septin-like GTPase superfamily. Era GTPase family. Monomer.

It is found in the cytoplasm. The protein resides in the cell membrane. In terms of biological role, an essential GTPase that binds both GDP and GTP, with rapid nucleotide exchange. Plays a role in 16S rRNA processing and 30S ribosomal subunit biogenesis and possibly also in cell cycle regulation and energy metabolism. This chain is GTPase Era, found in Oceanobacillus iheyensis (strain DSM 14371 / CIP 107618 / JCM 11309 / KCTC 3954 / HTE831).